Consider the following 143-residue polypeptide: Large ribosomal subunit protein uL11 (143 aa).

The protein belongs to the universal ribosomal protein uL11 family. In terms of assembly, part of the ribosomal stalk of the 50S ribosomal subunit. Interacts with L10 and the large rRNA to form the base of the stalk. L10 forms an elongated spine to which L12 dimers bind in a sequential fashion forming a multimeric L10(L12)X complex. In terms of processing, one or more lysine residues are methylated.

Forms part of the ribosomal stalk which helps the ribosome interact with GTP-bound translation factors. This Saccharophagus degradans (strain 2-40 / ATCC 43961 / DSM 17024) protein is Large ribosomal subunit protein uL11.